The primary structure comprises 282 residues: S-formylglutathione hydrolase (282 aa).

Ala-2 is modified (N-acetylalanine). The residue at position 4 (Lys-4) is an N6-succinyllysine. Catalysis depends on Ser-149, which acts as the Charge relay system. N6-acetyllysine is present on Lys-200. Active-site charge relay system residues include Asp-226 and His-260.

The protein belongs to the esterase D family. As to quaternary structure, homodimer.

The protein resides in the cytoplasm. It localises to the cytoplasmic vesicle. The enzyme catalyses S-formylglutathione + H2O = formate + glutathione + H(+). Functionally, serine hydrolase involved in the detoxification of formaldehyde. In Mus musculus (Mouse), this protein is S-formylglutathione hydrolase (Esd).